Here is a 345-residue protein sequence, read N- to C-terminus: S-adenosylmethionine:tRNA ribosyltransferase-isomerase (345 aa).

The protein belongs to the QueA family. In terms of assembly, monomer.

Its subcellular location is the cytoplasm. The enzyme catalyses 7-aminomethyl-7-carbaguanosine(34) in tRNA + S-adenosyl-L-methionine = epoxyqueuosine(34) in tRNA + adenine + L-methionine + 2 H(+). The protein operates within tRNA modification; tRNA-queuosine biosynthesis. Functionally, transfers and isomerizes the ribose moiety from AdoMet to the 7-aminomethyl group of 7-deazaguanine (preQ1-tRNA) to give epoxyqueuosine (oQ-tRNA). This is S-adenosylmethionine:tRNA ribosyltransferase-isomerase from Shewanella loihica (strain ATCC BAA-1088 / PV-4).